A 271-amino-acid chain; its full sequence is MTERYAVFGNPIGHSKSPAIHSMFATETAQSLTYEAILAPIDAFEATFKEFVTNKGYGANVTVPFKEQAFALCDELSEQAKLAGAVNTLSVLADGKIRGDNTDGLGLVADLQRNLGSLTGLKVLLVGAGGAARGSVLPLLQAGIAKLSIVNRTQAKAEILAELFSSYGDVVSLPISHTGKSYDVIINSTSSSLSGEVPNISSDSITSQTVCYDMMYGKEPTSFNVWAKAQGAKQTVDGLGMLVGQAAESFNIWRKVRPSVEPVLTQLRAEL.

Residues 15–17 and Thr-62 each bind shikimate; that span reads SKS. Lys-66 serves as the catalytic Proton acceptor. Residue Glu-78 coordinates NADP(+). Residues Asn-87 and Asp-103 each coordinate shikimate. NADP(+)-binding positions include 127 to 131, 151 to 156, and Met-214; these read GAGGA and NRTQAK. Position 216 (Tyr-216) interacts with shikimate. Position 238 (Gly-238) interacts with NADP(+).

Belongs to the shikimate dehydrogenase family. Homodimer.

It carries out the reaction shikimate + NADP(+) = 3-dehydroshikimate + NADPH + H(+). Its pathway is metabolic intermediate biosynthesis; chorismate biosynthesis; chorismate from D-erythrose 4-phosphate and phosphoenolpyruvate: step 4/7. In terms of biological role, involved in the biosynthesis of the chorismate, which leads to the biosynthesis of aromatic amino acids. Catalyzes the reversible NADPH linked reduction of 3-dehydroshikimate (DHSA) to yield shikimate (SA). The polypeptide is Shikimate dehydrogenase (NADP(+)) (Shewanella pealeana (strain ATCC 700345 / ANG-SQ1)).